Consider the following 255-residue polypeptide: Syntaxin-6 (255 aa).

The residue at position 2 (Ser-2) is an N-acetylserine. A Phosphoserine modification is found at Ser-2. The interval 2–168 is required for interaction with VPS51; the sequence is SMEDPFFVVK…QAQQQLIVEQ (167 aa). Residues 2–234 are Cytoplasmic-facing; it reads SMEDPFFVVK…VSHMTSDRRQ (233 aa). Positions 41-74 form a coiled coil; that stretch reads EEIDWTTNELRNNLRSIEWDLEDLDETISIVEAN. A phosphoserine mark is found at Ser-129 and Ser-152. Positions 163–225 constitute a t-SNARE coiled-coil homology domain; sequence QLIVEQQDEQ…DNVMKKLAKV (63 aa). A helical; Anchor for type IV membrane protein membrane pass occupies residues 235–255; that stretch reads WCAIAILFAVLVVVLILFLVL.

This sequence belongs to the syntaxin family. Identified in a complex containing STX6, STX12 and VAMP4. This complex also includes VTI1A. Binds EEA1. Interacts with VPS45A and GOPC. Interacts with MARCHF2; the interaction promotes MARCHF2-mediated ubiquitination and degradation of CFTR. Interacts with MARCHF3. Interacts with BLTP3B (via C-terminal coiled-coil domain). Interacts with BAIAP3; this interaction is increased in the presence of calcium. Interacts with VPS13B.

The protein localises to the golgi apparatus membrane. It localises to the golgi apparatus. The protein resides in the trans-Golgi network membrane. Its subcellular location is the recycling endosome membrane. Its function is as follows. SNARE promoting movement of transport vesicles to target membranes. Targets endosomes to the trans-Golgi network, and may therefore function in retrograde trafficking. Together with SNARE STX12, promotes movement of vesicles from endosomes to the cell membrane, and may therefore function in the endocytic recycling pathway. This chain is Syntaxin-6 (Stx6), found in Mus musculus (Mouse).